Consider the following 94-residue polypeptide: Putative pterin-4-alpha-carbinolamine dehydratase (94 aa).

The protein belongs to the pterin-4-alpha-carbinolamine dehydratase family.

The enzyme catalyses (4aS,6R)-4a-hydroxy-L-erythro-5,6,7,8-tetrahydrobiopterin = (6R)-L-erythro-6,7-dihydrobiopterin + H2O. The polypeptide is Putative pterin-4-alpha-carbinolamine dehydratase (Mycobacterium sp. (strain JLS)).